Reading from the N-terminus, the 187-residue chain is Probable nicotinate-nucleotide adenylyltransferase (187 aa).

This sequence belongs to the NadD family.

It carries out the reaction nicotinate beta-D-ribonucleotide + ATP + H(+) = deamido-NAD(+) + diphosphate. It functions in the pathway cofactor biosynthesis; NAD(+) biosynthesis; deamido-NAD(+) from nicotinate D-ribonucleotide: step 1/1. Its function is as follows. Catalyzes the reversible adenylation of nicotinate mononucleotide (NaMN) to nicotinic acid adenine dinucleotide (NaAD). This is Probable nicotinate-nucleotide adenylyltransferase from Anaeromyxobacter dehalogenans (strain 2CP-1 / ATCC BAA-258).